The sequence spans 75 residues: Caerin 1.11 (75 aa).

A signal peptide spans 1 to 22 (MASLKKSLFLVLFLGFVSVSIC). Residues 23–49 (EEEKRQEDEDEHEEEGENQEEGSEEKR) constitute a propeptide that is removed on maturation. Residues 24–48 (EEKRQEDEDEHEEEGENQEEGSEEK) are disordered. Residues 30–45 (DEDEHEEEGENQEEGS) show a composition bias toward acidic residues. Leu74 is subject to Leucine amide.

This sequence belongs to the frog skin active peptide (FSAP) family. Caerin subfamily. Expressed by the skin glands.

The protein resides in the secreted. It localises to the target cell membrane. Its function is as follows. Cationic amphipathic alpha-helical antimicrobial peptide with weak or no activity against both Gram-positive and Gram-negative bacteria. Is weakly active against E.coli (MIC=25 uM), E.cloacae (MIC=50 uM), K.pneumoniae (MIC=25 uM), and S.haemolyticus (MIC=50 uM). Has no activity against S.typhimurium, S.enteritidis, B.megaterium, and S.aureus (MIC&gt;100 uM). The protein is Caerin 1.11 of Ranoidea caerulea (Green tree frog).